The chain runs to 305 residues: Lipoyl synthase (305 aa).

Cys41, Cys46, Cys52, Cys68, Cys72, Cys75, and Ser281 together coordinate [4Fe-4S] cluster. One can recognise a Radical SAM core domain in the interval 54 to 270; the sequence is GARRTATFMI…RKVAMDKGFK (217 aa). The span at 283–298 shows a compositional bias: basic and acidic residues; the sequence is HADEQVNEAAKEKQRQ. The interval 283 to 305 is disordered; that stretch reads HADEQVNEAAKEKQRQGEAQLNS.

Belongs to the radical SAM superfamily. Lipoyl synthase family. The cofactor is [4Fe-4S] cluster.

The protein localises to the cytoplasm. It catalyses the reaction [[Fe-S] cluster scaffold protein carrying a second [4Fe-4S](2+) cluster] + N(6)-octanoyl-L-lysyl-[protein] + 2 oxidized [2Fe-2S]-[ferredoxin] + 2 S-adenosyl-L-methionine + 4 H(+) = [[Fe-S] cluster scaffold protein] + N(6)-[(R)-dihydrolipoyl]-L-lysyl-[protein] + 4 Fe(3+) + 2 hydrogen sulfide + 2 5'-deoxyadenosine + 2 L-methionine + 2 reduced [2Fe-2S]-[ferredoxin]. Its pathway is protein modification; protein lipoylation via endogenous pathway; protein N(6)-(lipoyl)lysine from octanoyl-[acyl-carrier-protein]. Its function is as follows. Catalyzes the radical-mediated insertion of two sulfur atoms into the C-6 and C-8 positions of the octanoyl moiety bound to the lipoyl domains of lipoate-dependent enzymes, thereby converting the octanoylated domains into lipoylated derivatives. This Staphylococcus aureus (strain bovine RF122 / ET3-1) protein is Lipoyl synthase.